Reading from the N-terminus, the 205-residue chain is Outer-membrane lipoprotein carrier protein (205 aa).

The N-terminal stretch at 1 to 21 (MRFLAVATMVVALMVPWSVRA) is a signal peptide.

It belongs to the LolA family. In terms of assembly, monomer.

The protein localises to the periplasm. In terms of biological role, participates in the translocation of lipoproteins from the inner membrane to the outer membrane. Only forms a complex with a lipoprotein if the residue after the N-terminal Cys is not an aspartate (The Asp acts as a targeting signal to indicate that the lipoprotein should stay in the inner membrane). This is Outer-membrane lipoprotein carrier protein from Methylobacillus flagellatus (strain ATCC 51484 / DSM 6875 / VKM B-1610 / KT).